Consider the following 484-residue polypeptide: Legumin type B (484 aa).

The signal sequence occupies residues 1 to 22 (MSKPFLSLLSLSLLLFTSTCLA). Cystine bridges form between Cys33–Cys66 and Cys109–Cys310. Positions 38–257 (INALEPDHRV…TFNTEEDTAK (220 aa)) constitute a Cupin type-1 1 domain. Disordered stretches follow at residues 109–141 (CPQT…RFRK), 196–236 (PETQ…GNSV), and 275–304 (GLRI…GRNG). Low complexity predominate over residues 117–129 (RSSQSRQGSRQQQ). Acidic residues predominate over residues 284–293 (QQEEEEEEEE). The 148-residue stretch at 316–463 (ENIAQPARAD…AFGLRQRQVT (148 aa)) folds into the Cupin type-1 2 domain.

Belongs to the 11S seed storage protein (globulins) family. As to quaternary structure, hexamer; each subunit is composed of an acidic and a basic chain derived from a single precursor and linked by a disulfide bond.

Its function is as follows. This protein found in the seeds of many leguminous and non-leguminous plants is the source of sulfur-containing amino acids in seed meals. In Vicia faba (Broad bean), this protein is Legumin type B (LEB4).